Consider the following 128-residue polypeptide: Protein ripply2 (128 aa).

The segment at 1 to 64 (MDTTESAESA…ALPSGPGMAE (64 aa)) is disordered. Over residues 17-28 (PSRSRCPPSAQP) the composition is skewed to low complexity. The short motif at 34–37 (WRPW) is the WRPW motif element. Positions 74–109 (HPVRLFWPKSKCYDYLYQEAETLLKNFPIQATISFY) are ripply homology domain.

This sequence belongs to the ripply family. In terms of tissue distribution, expressed in the embryonic anterior presomitic mesoderm. First expressed in S-I at 8.5 dpc, where expression is maintained until 13.5 dpc, with an additional stripe of expression sometimes seen in the rostral part of S0 and S-I.

It localises to the nucleus. Plays a role in somitogenesis. Required for somite segregation and establishment of rostrocaudal polarity in somites. This is Protein ripply2 from Mus musculus (Mouse).